A 193-amino-acid polypeptide reads, in one-letter code: Probable nicotinate-nucleotide adenylyltransferase (193 aa).

Belongs to the NadD family.

The catalysed reaction is nicotinate beta-D-ribonucleotide + ATP + H(+) = deamido-NAD(+) + diphosphate. The protein operates within cofactor biosynthesis; NAD(+) biosynthesis; deamido-NAD(+) from nicotinate D-ribonucleotide: step 1/1. Catalyzes the reversible adenylation of nicotinate mononucleotide (NaMN) to nicotinic acid adenine dinucleotide (NaAD). The sequence is that of Probable nicotinate-nucleotide adenylyltransferase from Flavobacterium psychrophilum (strain ATCC 49511 / DSM 21280 / CIP 103535 / JIP02/86).